Here is a 115-residue protein sequence, read N- to C-terminus: Phosphoribosyl-AMP cyclohydrolase (115 aa).

Position 80 (D80) interacts with Mg(2+). Residue C81 coordinates Zn(2+). The Mg(2+) site is built by D82 and D84. The Zn(2+) site is built by C97 and C104.

Belongs to the PRA-CH family. Homodimer. It depends on Mg(2+) as a cofactor. Zn(2+) is required as a cofactor.

The protein localises to the cytoplasm. It carries out the reaction 1-(5-phospho-beta-D-ribosyl)-5'-AMP + H2O = 1-(5-phospho-beta-D-ribosyl)-5-[(5-phospho-beta-D-ribosylamino)methylideneamino]imidazole-4-carboxamide. The protein operates within amino-acid biosynthesis; L-histidine biosynthesis; L-histidine from 5-phospho-alpha-D-ribose 1-diphosphate: step 3/9. Catalyzes the hydrolysis of the adenine ring of phosphoribosyl-AMP. This Nocardia farcinica (strain IFM 10152) protein is Phosphoribosyl-AMP cyclohydrolase.